Reading from the N-terminus, the 526-residue chain is Peptide chain release factor 3 (526 aa).

The tr-type G domain maps to 11–277; the sequence is SKRRTFAIIS…SLIKWAPSPL (267 aa). GTP contacts are provided by residues 20 to 27, 88 to 92, and 142 to 145; these read SHPDAGKT, DTPGH, and NKLD.

Belongs to the TRAFAC class translation factor GTPase superfamily. Classic translation factor GTPase family. PrfC subfamily.

It is found in the cytoplasm. In terms of biological role, increases the formation of ribosomal termination complexes and stimulates activities of RF-1 and RF-2. It binds guanine nucleotides and has strong preference for UGA stop codons. It may interact directly with the ribosome. The stimulation of RF-1 and RF-2 is significantly reduced by GTP and GDP, but not by GMP. This is Peptide chain release factor 3 from Buchnera aphidicola subsp. Acyrthosiphon pisum (strain 5A).